The following is a 298-amino-acid chain: UDP-N-acetylenolpyruvoylglucosamine reductase (298 aa).

The FAD-binding PCMH-type domain maps to 27-191 (TGGEADVFVM…LDATFSLALE (165 aa)). R170 is a catalytic residue. S220 serves as the catalytic Proton donor. E290 is a catalytic residue.

Belongs to the MurB family. FAD serves as cofactor.

It localises to the cytoplasm. The enzyme catalyses UDP-N-acetyl-alpha-D-muramate + NADP(+) = UDP-N-acetyl-3-O-(1-carboxyvinyl)-alpha-D-glucosamine + NADPH + H(+). Its pathway is cell wall biogenesis; peptidoglycan biosynthesis. Its function is as follows. Cell wall formation. The protein is UDP-N-acetylenolpyruvoylglucosamine reductase of Listeria monocytogenes serotype 4a (strain HCC23).